The following is a 312-amino-acid chain: Ribose-phosphate pyrophosphokinase (312 aa).

ATP-binding positions include 34–36 (DGE) and 93–94 (RQ). Histidine 128 and aspartate 167 together coordinate Mg(2+). Lysine 191 is an active-site residue. The D-ribose 5-phosphate site is built by arginine 193 and aspartate 217.

This sequence belongs to the ribose-phosphate pyrophosphokinase family. Class I subfamily. Homohexamer. Requires Mg(2+) as cofactor.

The protein resides in the cytoplasm. The enzyme catalyses D-ribose 5-phosphate + ATP = 5-phospho-alpha-D-ribose 1-diphosphate + AMP + H(+). It participates in metabolic intermediate biosynthesis; 5-phospho-alpha-D-ribose 1-diphosphate biosynthesis; 5-phospho-alpha-D-ribose 1-diphosphate from D-ribose 5-phosphate (route I): step 1/1. Its function is as follows. Involved in the biosynthesis of the central metabolite phospho-alpha-D-ribosyl-1-pyrophosphate (PRPP) via the transfer of pyrophosphoryl group from ATP to 1-hydroxyl of ribose-5-phosphate (Rib-5-P). The protein is Ribose-phosphate pyrophosphokinase of Baumannia cicadellinicola subsp. Homalodisca coagulata.